A 418-amino-acid polypeptide reads, in one-letter code: Putative O-antigen transporter (418 aa).

11 helical membrane passes run valine 8–leucine 28, phenylalanine 37–leucine 57, phenylalanine 85–valine 105, leucine 124–glycine 144, isoleucine 165–phenylalanine 185, leucine 217–phenylalanine 237, valine 251–isoleucine 271, leucine 297–valine 317, leucine 334–isoleucine 354, isoleucine 362–valine 382, and tyrosine 385–leucine 405.

It belongs to the polysaccharide synthase family.

It localises to the cell inner membrane. It participates in bacterial outer membrane biogenesis; lipopolysaccharide biosynthesis. Functionally, could be an O-antigen transporter. The protein is Putative O-antigen transporter (rfbE) of Shigella flexneri.